We begin with the raw amino-acid sequence, 167 residues long: RNA pyrophosphohydrolase (167 aa).

Residues 8–159 (PYRTCVGVML…KRPVYERVVK (152 aa)) form the Nudix hydrolase domain. The Nudix box motif lies at 47-68 (GGVDPGEDTWAAAKRELYEETS).

Belongs to the Nudix hydrolase family. RppH subfamily. A divalent metal cation is required as a cofactor.

Its function is as follows. Accelerates the degradation of transcripts by removing pyrophosphate from the 5'-end of triphosphorylated RNA, leading to a more labile monophosphorylated state that can stimulate subsequent ribonuclease cleavage. This chain is RNA pyrophosphohydrolase, found in Bradyrhizobium diazoefficiens (strain JCM 10833 / BCRC 13528 / IAM 13628 / NBRC 14792 / USDA 110).